Here is a 500-residue protein sequence, read N- to C-terminus: NAD(P)H-quinone oxidoreductase chain 4, chloroplastic (500 aa).

A run of 13 helical transmembrane segments spans residues 4–24, 35–55, 87–107, 134–154, 167–187, 211–231, 242–262, 272–292, 305–325, 330–350, 386–406, 416–436, and 462–482; these read FPWLTIIVVFPISAGSLMLFL, YTISICILELLLTTYAFCYNF, IGTILLTGFITTLATLAAFPV, LLLFFIMWELELIPVYHLLSM, FILYTAGSSIFLLIGVLGISL, ILFYIGFLIAFAVKSPIIPLH, HYSTCMLLAGILLKMGAYGLV, AHSMFSPWLMVVGTIQIIYAA, IAYSSVSHMGFIIIGISSITD, GAILQIISHGFIGAALFFLAG, LALPGMSGFVAELIVFFGIIT, IFIIFVMAIGMILTPIYLLSM, and LFLSISILLPIIGIGIYPDFV.

This sequence belongs to the complex I subunit 4 family.

It is found in the plastid. It localises to the chloroplast thylakoid membrane. It carries out the reaction a plastoquinone + NADH + (n+1) H(+)(in) = a plastoquinol + NAD(+) + n H(+)(out). The catalysed reaction is a plastoquinone + NADPH + (n+1) H(+)(in) = a plastoquinol + NADP(+) + n H(+)(out). The sequence is that of NAD(P)H-quinone oxidoreductase chain 4, chloroplastic from Crucihimalaya wallichii (Rock-cress).